Reading from the N-terminus, the 178-residue chain is ADP-ribosylation factor-like protein 5 (178 aa).

G2 is lipidated: N-myristoyl glycine. GTP contacts are provided by residues 24–31 (GLDNAGKT), 67–71 (DIGGQ), and 126–129 (NKQD).

The protein belongs to the small GTPase superfamily. Arf family.

It localises to the golgi apparatus. GTP-binding protein that may be involved in protein trafficking; may modulate vesicle budding and uncoating within the Golgi apparatus. Plays a role in the shedding of pathogen spores from intestinal cells. In Caenorhabditis elegans, this protein is ADP-ribosylation factor-like protein 5 (arl-5).